A 168-amino-acid chain; its full sequence is NAD(P)H-quinone oxidoreductase subunit J, chloroplastic (168 aa).

It belongs to the complex I 30 kDa subunit family. As to quaternary structure, NDH is composed of at least 16 different subunits, 5 of which are encoded in the nucleus.

Its subcellular location is the plastid. It localises to the chloroplast thylakoid membrane. The catalysed reaction is a plastoquinone + NADH + (n+1) H(+)(in) = a plastoquinol + NAD(+) + n H(+)(out). The enzyme catalyses a plastoquinone + NADPH + (n+1) H(+)(in) = a plastoquinol + NADP(+) + n H(+)(out). Functionally, NDH shuttles electrons from NAD(P)H:plastoquinone, via FMN and iron-sulfur (Fe-S) centers, to quinones in the photosynthetic chain and possibly in a chloroplast respiratory chain. The immediate electron acceptor for the enzyme in this species is believed to be plastoquinone. Couples the redox reaction to proton translocation, and thus conserves the redox energy in a proton gradient. In Chaetosphaeridium globosum (Charophycean green alga), this protein is NAD(P)H-quinone oxidoreductase subunit J, chloroplastic.